A 313-amino-acid polypeptide reads, in one-letter code: Olfactory receptor 1G1 (313 aa).

Residues 1–25 (MEGKNLTSISEFFLLGFSEQLEEQK) lie on the Extracellular side of the membrane. N5 is a glycosylation site (N-linked (GlcNAc...) asparagine). A helical membrane pass occupies residues 26 to 49 (ALFGSFLFMYLVTVAGNLLIILVI). Topologically, residues 50 to 57 (ITDTQLHT) are cytoplasmic. Residues 58-79 (PMYFFLANLSLADACFVSTTVP) form a helical membrane-spanning segment. The Extracellular segment spans residues 80–100 (KMLANIQIQSQAISYSGCLLQ). C97 and C189 are disulfide-bonded. Residues 101–120 (LYFFMLFVMLEAFLLAVMAY) form a helical membrane-spanning segment. The Cytoplasmic portion of the chain corresponds to 121 to 140 (DRYVAICHPLHYILIMSPGL). A helical transmembrane segment spans residues 141–158 (CVFLVSASWIMNALHSLL). Topologically, residues 159 to 196 (HTLLMNSLSFCANHEIPHFFCDIDPLLSLSCTDPFTNE) are extracellular. A helical membrane pass occupies residues 197–219 (LVIFITGGLTGLVCVLCLIISYT). The Cytoplasmic portion of the chain corresponds to 220 to 236 (NIFSTILKIPSAQGKRK). The chain crosses the membrane as a helical span at residues 237-259 (AFSTCGSHLSVVSLFFGTSFCVY). Over 260 to 272 (FIPPSTRSAQKDT) the chain is Extracellular. Residues 273 to 292 (VASVMYTVVTPMLNPFIYSL) traverse the membrane as a helical segment. The Cytoplasmic portion of the chain corresponds to 293–313 (RNQEIKSSLRKLIWVREIHSP).

The protein belongs to the G-protein coupled receptor 1 family.

The protein resides in the cell membrane. Odorant receptor. The polypeptide is Olfactory receptor 1G1 (OR1G1) (Gorilla gorilla gorilla (Western lowland gorilla)).